A 100-amino-acid polypeptide reads, in one-letter code: Chorion class A protein M2774 (100 aa).

Residues 1 to 33 form a left arm region; the sequence is GGGWNGWNGLGGGWNGLGVGWSRLDGGYGGGCG. Residues 34–81 form a central domain region; sequence SYGGEGIGNVGVADELPVGGVTAVGGRVPIIGGVEYGGPARAAGAVSI. Residues 82-100 form a right arm region; sequence CGHCAPTCGCGRAGLGGYY.

The protein belongs to the chorion protein family.

In terms of biological role, this protein is one of many from the eggshell of the silk moth. The protein is Chorion class A protein M2774 of Bombyx mori (Silk moth).